Reading from the N-terminus, the 644-residue chain is MFQDNPLLAQLKQQLHTQTPRVEGVVKGTEKGFGFLEVDGQKSYFIPPPQMKKVMHGDRIIATLHTDKDREIAEPETLVEPFLSRFVGRVQRKDDRLSIVPDHPLLRDAIQCRPVRELTHSFQNGDWVVAEMCRHPLKGDRAFQADLTAFITNGEDHFVPWWVTLARHNLEREAPAMVESALNDAELEREDLTALNFVTIDSASTEDMDDALFVQDNGDGSWLLTIAIADPTAYVVENSELDLTARKRAFTNYLPGFNIPMLPRDLSDNLCSLRPNERRPVLVCRVTITEEGTLSNDIRFSAAWVESKAKLVYDDVSDWLEGNNRWQPQDTAIAEQITLLKRICDARSNWRQQHALVFKDRPDYRFLLGEKGEVLDIIVEHRRIANRIVEECMIAANVCAALALREHLGFGIYNVHTGFDPALVEQAASVLKANGVDADPQALLTLPGFCELRRHLDALPTQFLDSRIRRFQTFAEISTVPGPHFGLGLEAYATWTSPIRKYGDMVNHRLLKAMITGQQAEKPQEEITVQLAERRRLNRMAERDVGDWLYARYLQPQAGTDTRFTAEIIDITRGGLRVRLLDNGAVAFIPAPFIHAVRDEVVCSQETGTVQIKGETVYSQSDKIEVRIAEVRMETRNVIARPVA.

The 328-residue stretch at 189-516 folds into the RNB domain; that stretch reads REDLTALNFV…NHRLLKAMIT (328 aa). The S1 motif domain occupies 561-643; that stretch reads DTRFTAEIID…ETRNVIARPV (83 aa).

Belongs to the RNR ribonuclease family. RNase II subfamily.

Its subcellular location is the cytoplasm. The catalysed reaction is Exonucleolytic cleavage in the 3'- to 5'-direction to yield nucleoside 5'-phosphates.. Functionally, involved in mRNA degradation. Hydrolyzes single-stranded polyribonucleotides processively in the 3' to 5' direction. This is Exoribonuclease 2 from Yersinia pseudotuberculosis serotype IB (strain PB1/+).